The following is a 259-amino-acid chain: V-type proton ATPase subunit D (259 aa).

The tract at residues 214-259 (KLKEQEAAQRALEGPPKEEAGGTHSENQPPRNLLAVEEDNLPVLFN) is disordered.

Belongs to the V-ATPase D subunit family. As to quaternary structure, V-ATPase is a heteromultimeric enzyme made up of two complexes: the ATP-hydrolytic V1 complex and the proton translocation V0 complex. The V1 complex consists of three catalytic AB heterodimers that form a heterohexamer, three peripheral stalks each consisting of EG heterodimers, one central rotor including subunits D and F, and the regulatory subunits C and H. The proton translocation complex V0 consists of the proton transport subunit a, a ring of proteolipid subunits c9c'', rotary subunit d, and The proton translocation complex V0 consists of the proton transport subunit a, a ring of proteolipid subunits c9c'', rotary subunit d, subunits e and f, and the accessory subunits vah-19/Ac45 and vah-20/PRR.

Its function is as follows. Subunit of the V1 complex of vacuolar(H+)-ATPase (V-ATPase), a multisubunit enzyme composed of a peripheral complex (V1) that hydrolyzes ATP and a membrane integral complex (V0) that translocates protons. V-ATPase is responsible for acidifying and maintaining the pH of intracellular compartments and in some cell types, is targeted to the plasma membrane, where it is responsible for acidifying the extracellular environment. The protein is V-type proton ATPase subunit D of Caenorhabditis briggsae.